The following is a 74-amino-acid chain: Conotoxin AbVII (74 aa).

The signal sequence occupies residues 1 to 17 (VLIIAVLFLTACQLTTA). A propeptide spanning residues 18–40 (ETSSRGKQKHRALRSTDKNSRMT) is cleaved from the precursor. The interval 19 to 41 (TSSRGKQKHRALRSTDKNSRMTK) is disordered. 3 disulfide bridges follow: C43–C57, C50–C61, and C56–C68.

Belongs to the conotoxin O1 superfamily. Expressed by the venom duct.

It localises to the secreted. The chain is Conotoxin AbVII from Conus abbreviatus (Abbreviated cone).